A 1203-amino-acid chain; its full sequence is Regulator of telomere elongation helicase 1 (1203 aa).

In terms of domain architecture, Helicase ATP-binding spans 7-296; sequence NGVTVDFPFQ…ARVTQQGELQ (290 aa). Residue 42 to 49 coordinates ATP; that stretch reads SPTGTGKT. Positions 145, 163, 172, and 207 each coordinate [4Fe-4S] cluster. A Nuclear localization signal motif is present at residues 151–167; the sequence is KKQESNHMQISLCRKKV. The DEAH box motif lies at 250–253; that stretch reads DEAH. The Nuclear localization signal motif lies at 871-877; that stretch reads QKGGRKK. Disordered regions lie at residues 998–1020 and 1120–1203; these read QLDP…TSKG and TTGK…RSKQ. Positions 1123–1134 are enriched in basic and acidic residues; the sequence is KDLELEGPRDES. Positions 1160-1167 match the PIP-box motif; the sequence is QSKISSFF. The span at 1169 to 1181 shows a compositional bias: basic and acidic residues; the sequence is QRPDESVRSDDTT.

The protein belongs to the helicase family. RAD3/XPD subfamily. In terms of assembly, interacts with TERF1. Interacts (via PIP-box) with PCNA; the interaction is direct and essential for suppressing telomere fragility. Interacts with MMS19; the interaction mediates the association of RTEL1 with the cytosolic iron-sulfur protein assembly (CIA) complex.

The protein resides in the nucleus. It carries out the reaction ATP + H2O = ADP + phosphate + H(+). Functionally, a probable ATP-dependent DNA helicase implicated in telomere-length regulation, DNA repair and the maintenance of genomic stability. Acts as an anti-recombinase to counteract toxic recombination and limit crossover during meiosis. Regulates meiotic recombination and crossover homeostasis by physically dissociating strand invasion events and thereby promotes noncrossover repair by meiotic synthesis dependent strand annealing (SDSA) as well as disassembly of D loop recombination intermediates. Also disassembles T loops and prevents telomere fragility by counteracting telomeric G4-DNA structures, which together ensure the dynamics and stability of the telomere. The chain is Regulator of telomere elongation helicase 1 (Rtel1) from Mus spretus (Western Mediterranean mouse).